A 264-amino-acid polypeptide reads, in one-letter code: Complement C1q tumor necrosis factor-related protein 6 (264 aa).

The first 24 residues, 1-24, serve as a signal peptide directing secretion; the sequence is MRVIMGIASLGFLWAVFLLPLVFG. N-linked (GlcNAc...) asparagine glycosylation occurs at Asn77. The interval 81-125 is disordered; the sequence is LKGDKGDRGPTGTPGKPGKNGTRGDRGSQGVKGDKGQAGSPGSSC. One can recognise a Collagen-like domain in the interval 83-124; the sequence is GDKGDRGPTGTPGKPGKNGTRGDRGSQGVKGDKGQAGSPGSS. Positions 90–100 are enriched in low complexity; it reads PTGTPGKPGKN. Residues 125 to 264 form the C1q domain; that stretch reads CQTHYSAFSV…SGHLIKAEDN (140 aa).

The protein resides in the secreted. This is Complement C1q tumor necrosis factor-related protein 6 (C1qtnf6) from Mus musculus (Mouse).